A 406-amino-acid chain; its full sequence is LIM/homeobox protein Lhx1 (406 aa).

2 LIM zinc-binding domains span residues 4 to 54 (CAGC…CKND) and 63 to 117 (CAGC…CKED). Disordered stretches follow at residues 128-189 (NSLH…TIKA) and 294-372 (DFFP…SAEV). Over residues 137–148 (SDPSLSPDSQDP) the composition is skewed to low complexity. Residues 151-167 (DDAKDSESANVSDKEGG) are compositionally biased toward basic and acidic residues. Serine 162 carries the post-translational modification Phosphoserine. The segment at residues 180 to 239 (RRGPRTTIKAKQLETLKAAFAATPKPTRHIREQLAQETGLNMRVIQVWFQNRRSKERRMK) is a DNA-binding region (homeobox). Residues 315 to 327 (PSSGPSGTPLGGL) are compositionally biased toward low complexity. Positions 352–362 (GDSPSPEPSLP) are enriched in pro residues.

Interacts with LDB1 via the tandem LIM domains.

Its subcellular location is the nucleus. In terms of biological role, potential transcription factor. May play a role in early mesoderm formation and later in lateral mesoderm differentiation and neurogenesis. In Mesocricetus auratus (Golden hamster), this protein is LIM/homeobox protein Lhx1 (Lhx1).